The following is a 378-amino-acid chain: AA13 family lytic polysaccharide monooxygenase A (378 aa).

Residues 1–17 (MKWSVIQALALASGVQA) form the signal peptide. His-18 provides a ligand contact to Cu(2+). Position 18 is a methylhistidine (His-18). Residues 18-244 (HGYLTFPMSR…PQIYLTCADI (227 aa)) enclose the Chitin-binding type-4 domain. Disulfide bonds link Cys-39–Cys-42, Cys-65–Cys-241, Cys-101–Cys-199, Cys-117–Cys-144, Cys-152–Cys-160, Cys-166–Cys-172, and Cys-180–Cys-188. Cu(2+) is bound at residue His-108. Residue Asn-221 is glycosylated (N-linked (GlcNAc...) asparagine). Tyr-238 is a binding site for Cu(2+). Positions 250–263 (DSQSPPTTTTTSTP) are enriched in low complexity. The segment at 250-272 (DSQSPPTTTTTSTPASPPPTSCA) is disordered. The 107-residue stretch at 272 to 378 (ATPAASVAVT…GTATVDTAWK (107 aa)) folds into the CBM20 domain.

The protein belongs to the polysaccharide monooxygenase AA13 family. Cu(2+) is required as a cofactor. O-mannosylated.

The protein localises to the secreted. It catalyses the reaction starch + reduced acceptor + O2 = D-glucono-1,5-lactone-terminated malto-oligosaccharides + short-chain malto-oligosaccharides + acceptor + H2O.. Its activity is regulated as follows. Activity is inhibited by both beta-cyclodextrin or amylose that block the access to the active site. In terms of biological role, starch-active lytic polysaccharide monooxygenase that oxidizes the C1 position of starch substrates. Catalysis by LPMOs requires the reduction of the active-site copper from Cu(II) to Cu(I) by a reducing agent and H(2)O(2) or O(2) as a cosubstrate. In Pyricularia oryzae (strain 70-15 / ATCC MYA-4617 / FGSC 8958) (Rice blast fungus), this protein is AA13 family lytic polysaccharide monooxygenase A.